A 130-amino-acid polypeptide reads, in one-letter code: Small ribosomal subunit protein uS11 (130 aa).

The protein belongs to the universal ribosomal protein uS11 family. In terms of assembly, part of the 30S ribosomal subunit. Interacts with proteins S7 and S18. Binds to IF-3.

Functionally, located on the platform of the 30S subunit, it bridges several disparate RNA helices of the 16S rRNA. Forms part of the Shine-Dalgarno cleft in the 70S ribosome. This chain is Small ribosomal subunit protein uS11, found in Thiobacillus denitrificans (strain ATCC 25259 / T1).